The primary structure comprises 502 residues: Facilitated trehalose transporter Tret1 (502 aa).

Topologically, residues Met-1–Arg-38 are cytoplasmic. The chain crosses the membrane as a helical span at residues Tyr-39–Ser-59. At Ser-60–Asp-83 the chain is on the extracellular side. Asn-73 is a glycosylation site (N-linked (GlcNAc...) asparagine). A helical transmembrane segment spans residues Met-84–Gly-104. Over Pro-105–Ala-120 the chain is Cytoplasmic. A helical transmembrane segment spans residues Leu-121 to Val-141. Topologically, residues Gly-142–Ser-144 are extracellular. A helical membrane pass occupies residues Ile-145–Ile-165. Over Gln-166–Ser-172 the chain is Cytoplasmic. The helical transmembrane segment at Leu-173 to Met-193 threads the bilayer. Over Tyr-194–Asn-199 the chain is Extracellular. Residues Leu-200–Glu-220 form a helical membrane-spanning segment. Topologically, residues Thr-221–Pro-282 are cytoplasmic. The chain crosses the membrane as a helical span at residues Val-283 to Phe-303. Residues Tyr-304–Asn-319 lie on the Extracellular side of the membrane. Asn-319 carries N-linked (GlcNAc...) asparagine glycosylation. A helical membrane pass occupies residues Leu-320–Ile-340. Residues Asp-341–Lys-346 are Cytoplasmic-facing. Residues Met-347–Phe-367 traverse the membrane as a helical segment. Over Tyr-368 to Thr-376 the chain is Extracellular. The chain crosses the membrane as a helical span at residues Ala-377–Phe-397. Residues Gly-398 to Pro-410 lie on the Cytoplasmic side of the membrane. Residues Val-411–Thr-433 traverse the membrane as a helical segment. The Extracellular portion of the chain corresponds to Lys-434–Tyr-446. A helical transmembrane segment spans residues Gly-447–Val-467. Residues Pro-468–Ile-502 are Cytoplasmic-facing.

The protein belongs to the major facilitator superfamily. Sugar transporter (TC 2.A.1.1) family. Trehalose transporter subfamily.

It localises to the cell membrane. Moderate-capacity facilitative transporter for trehalose. Does not transport maltose, sucrose or lactose. Mediates the bidirectional transfer of trehalose. Responsible for the transport of trehalose synthesized in the fat body and the incorporation of trehalose into other tissues that require a carbon source, thereby regulating trehalose levels in the hemolymph. This Apis mellifera ligustica (Common honeybee) protein is Facilitated trehalose transporter Tret1.